The primary structure comprises 141 residues: Thioredoxin-like protein SkfH (141 aa).

A Thioredoxin domain is found at 2-141 (KDEQMLTEWP…DKMLKKIAGL (140 aa)). A disulfide bridge connects residues cysteine 41 and cysteine 44.

Required for production of the bacteriocin SkfA. The protein is Thioredoxin-like protein SkfH of Bacillus subtilis (strain 168).